Here is a 1218-residue protein sequence, read N- to C-terminus: ATP-dependent helicase/deoxyribonuclease subunit B (1218 aa).

A UvrD-like helicase ATP-binding domain is found at 1-279 (MRFIVGRAGT…VFLTETHRFE (279 aa)). 6 to 13 (GRAGTGKS) is a binding site for ATP. The 308-residue stretch at 281 to 588 (AGLKHLERFY…LVGSLDRSRN (308 aa)) folds into the UvrD-like helicase C-terminal domain. A [4Fe-4S] cluster-binding site is contributed by C786. The interval 987 to 1006 (LAEGSKGSEGSEGSEDSEDS) is disordered. C1126, C1129, and C1135 together coordinate [4Fe-4S] cluster. Polar residues predominate over residues 1160-1169 (RVQSQDSEQY). The disordered stretch occupies residues 1160–1218 (RVQSQDSEQYPEQHPPTSVPGETSRRALQKDGGNSPRGQELIWLGEDEAGAGKEDDGHE). Over residues 1209–1218 (GAGKEDDGHE) the composition is skewed to basic and acidic residues.

Belongs to the helicase family. AddB/RexB type 1 subfamily. Heterodimer of AddA and AddB. Requires Mg(2+) as cofactor. [4Fe-4S] cluster serves as cofactor.

The heterodimer acts as both an ATP-dependent DNA helicase and an ATP-dependent, dual-direction single-stranded exonuclease. Recognizes the chi site generating a DNA molecule suitable for the initiation of homologous recombination. The AddB subunit has 5' -&gt; 3' nuclease activity but not helicase activity. This chain is ATP-dependent helicase/deoxyribonuclease subunit B, found in Desulfitobacterium hafniense (strain DSM 10664 / DCB-2).